Consider the following 413-residue polypeptide: Multifunctional CCA protein (413 aa).

Residues glycine 8 and arginine 11 each contribute to the ATP site. CTP-binding residues include glycine 8 and arginine 11. The Mg(2+) site is built by aspartate 21 and aspartate 23. ATP is bound by residues arginine 91, arginine 137, and arginine 140. CTP-binding residues include arginine 91, arginine 137, and arginine 140. The HD domain maps to 225-326; sequence TGVHVMMVID…ANLLQGVDAY (102 aa).

It belongs to the tRNA nucleotidyltransferase/poly(A) polymerase family. Bacterial CCA-adding enzyme type 1 subfamily. In terms of assembly, monomer. Can also form homodimers and oligomers. It depends on Mg(2+) as a cofactor. Ni(2+) is required as a cofactor.

The catalysed reaction is a tRNA precursor + 2 CTP + ATP = a tRNA with a 3' CCA end + 3 diphosphate. The enzyme catalyses a tRNA with a 3' CCA end + 2 CTP + ATP = a tRNA with a 3' CCACCA end + 3 diphosphate. Functionally, catalyzes the addition and repair of the essential 3'-terminal CCA sequence in tRNAs without using a nucleic acid template. Adds these three nucleotides in the order of C, C, and A to the tRNA nucleotide-73, using CTP and ATP as substrates and producing inorganic pyrophosphate. tRNA 3'-terminal CCA addition is required both for tRNA processing and repair. Also involved in tRNA surveillance by mediating tandem CCA addition to generate a CCACCA at the 3' terminus of unstable tRNAs. While stable tRNAs receive only 3'-terminal CCA, unstable tRNAs are marked with CCACCA and rapidly degraded. The sequence is that of Multifunctional CCA protein from Nitrosospira multiformis (strain ATCC 25196 / NCIMB 11849 / C 71).